The sequence spans 594 residues: UvrABC system protein C (594 aa).

One can recognise a GIY-YIG domain in the interval 14–91 (DQPGCYLMKD…IKKHDPKYNI (78 aa)). Residues 196–231 (KEVRSELETKMYEASEKLEFERAKELRDQIAHIDAI) form the UVR domain.

The protein belongs to the UvrC family. In terms of assembly, interacts with UvrB in an incision complex.

It is found in the cytoplasm. The UvrABC repair system catalyzes the recognition and processing of DNA lesions. UvrC both incises the 5' and 3' sides of the lesion. The N-terminal half is responsible for the 3' incision and the C-terminal half is responsible for the 5' incision. This is UvrABC system protein C from Bacillus cereus (strain AH187).